The primary structure comprises 1897 residues: Spectinabilin polyketide synthase system protein NorA (1897 aa).

The Ketosynthase family 3 (KS3) domain occupies 112 to 536 (EEPIAIVGMG…GTNAHIILEQ (425 aa)). Residues cysteine 283, histidine 418, and histidine 458 each act as for beta-ketoacyl synthase activity in the active site. Residues 538 to 563 (APEPERPHAPEADGEPRPLPWPVSGH) form a disordered region. Basic and acidic residues predominate over residues 540–553 (EPERPHAPEADGEP). The region spanning 644 to 962 (FVFPGQGSQW…VAEAHVHGVA (319 aa)) is the Malonyl-CoA:ACP transacylase (MAT) domain. The segment at 1012 to 1139 (HPLLGAAIPL…GTLAPGGGHP (128 aa)) is N-terminal hotdog fold. A PKS/mFAS DH domain is found at 1012–1289 (HPLLGAAIPL…MRPVTAEALH (278 aa)). The active-site Proton acceptor; for dehydratase activity is histidine 1045. Residues 1113–1152 (SRPEDAGADEPWTRHAEGTLAPGGGHPRQDPGPWPPTGAR) are disordered. The interval 1151–1289 (AREIDLDDCY…MRPVTAEALH (139 aa)) is C-terminal hotdog fold. The active-site Proton donor; for dehydratase activity is the aspartate 1211. Residues 1494–1671 (GTVLVTGGLG…GVSMGWGMWA (178 aa)) form the Ketoreductase (KR) domain. Residues 1777 to 1852 (ALLLGVVRGH…ALSRYLRTLL (76 aa)) form the Carrier domain. An O-(pantetheine 4'-phosphoryl)serine modification is found at serine 1812. The tract at residues 1854 to 1873 (PDPAPAPTAPDGQPGPDQAD) is disordered. Positions 1862–1871 (APDGQPGPDQ) are enriched in low complexity.

The spectinabilin polyketide synthase complex is composed of 4 proteins, NorA, NorA', NorB and NorC. The complex comprises 6 modules with a total of 28 catalytic domains catalyzing 7 chain elongations. NorA comprises one module, NorA' two modules, NorB one module and NorC two modules. Pantetheine 4'-phosphate is required as a cofactor.

The enzyme catalyses 4-nitrobenzoyl-CoA + 6 (S)-methylmalonyl-CoA + malonyl-CoA + 6 NADPH + 12 H(+) = demethyldeoxyspectinabilin + 7 CO2 + 6 NADP(+) + 8 CoA + 5 H2O. It functions in the pathway antibiotic biosynthesis. It participates in polyketide biosynthesis. Functionally, component of a type I modular polyketide synthase (PKS) that generates the backbone of the antibiotic spectinabilin (also known as neoaureothin), a nitroaryl-substituted polyketide metabolite. This PKS system accepts the unusual starter unit 4-nitrobenzoyl-CoA and extends it by 6 molecules of (S)-methylmalonyl-CoA and a single molecule of malonyl-CoA. The first module, NorA, is used twice in an iterative fashion. The protein is Spectinabilin polyketide synthase system protein NorA of Streptomyces orinoci (Streptoverticillium orinoci).